A 195-amino-acid chain; its full sequence is Glycerol-3-phosphate acyltransferase (195 aa).

5 consecutive transmembrane segments (helical) span residues 2 to 22, 52 to 72, 78 to 98, 112 to 132, and 145 to 165; these read LWIF…GLFI, YGVA…LMAY, WIFI…SIFM, VFLA…LAVI, and FAVA…VPLA.

It belongs to the PlsY family. In terms of assembly, probably interacts with PlsX.

The protein localises to the cell inner membrane. The enzyme catalyses an acyl phosphate + sn-glycerol 3-phosphate = a 1-acyl-sn-glycero-3-phosphate + phosphate. It functions in the pathway lipid metabolism; phospholipid metabolism. Functionally, catalyzes the transfer of an acyl group from acyl-phosphate (acyl-PO(4)) to glycerol-3-phosphate (G3P) to form lysophosphatidic acid (LPA). This enzyme utilizes acyl-phosphate as fatty acyl donor, but not acyl-CoA or acyl-ACP. The chain is Glycerol-3-phosphate acyltransferase from Maridesulfovibrio salexigens (strain ATCC 14822 / DSM 2638 / NCIMB 8403 / VKM B-1763) (Desulfovibrio salexigens).